Here is a 120-residue protein sequence, read N- to C-terminus: Large ribosomal subunit protein uL18 (120 aa).

It belongs to the universal ribosomal protein uL18 family. As to quaternary structure, part of the 50S ribosomal subunit; part of the 5S rRNA/L5/L18/L25 subcomplex. Contacts the 5S and 23S rRNAs.

In terms of biological role, this is one of the proteins that bind and probably mediate the attachment of the 5S RNA into the large ribosomal subunit, where it forms part of the central protuberance. In Synechococcus elongatus (strain ATCC 33912 / PCC 7942 / FACHB-805) (Anacystis nidulans R2), this protein is Large ribosomal subunit protein uL18.